Reading from the N-terminus, the 47-residue chain is uncharacterized protein (47 aa).

Positions 24-47 (FGPNPIEPPTDIAPDPDSTKTWLI) are disordered.

This is an uncharacterized protein from Mycobacterium tuberculosis (strain ATCC 25618 / H37Rv).